We begin with the raw amino-acid sequence, 275 residues long: MTNQGAIPVIVNGAAGKMGREVVKAVAQAADLTLFGAVDRNPSLQGQDIGEVVGIGPLEVPLLADLQSLLVAAAQEPQAGVMVDFTHPNSVYDNVRMAIAYGVRPVVGTTGLSPEQIRDLATFADKASMGCLIIPNFSIGMVLLQQAAIQASQYFDHVEIIELHHNQKADAPSGTALQTAQLLAELGKTYNPPAVKETEHLAGARGSLAEEGIRIHSVRLPGLIAHQEVIFGAPGQVYTLRHDTSDRSCYMPGVLLAIRKVMNLETVVYGLEKIL.

NAD(+) contacts are provided by residues 13–18 (GAAGKM) and 108–110 (GTT). The active-site Proton donor/acceptor is the histidine 164. (S)-2,3,4,5-tetrahydrodipicolinate is bound at residue histidine 165. Lysine 168 serves as the catalytic Proton donor. 174 to 175 (GT) is a (S)-2,3,4,5-tetrahydrodipicolinate binding site.

Belongs to the DapB family.

It localises to the cytoplasm. The catalysed reaction is (S)-2,3,4,5-tetrahydrodipicolinate + NAD(+) + H2O = (2S,4S)-4-hydroxy-2,3,4,5-tetrahydrodipicolinate + NADH + H(+). It catalyses the reaction (S)-2,3,4,5-tetrahydrodipicolinate + NADP(+) + H2O = (2S,4S)-4-hydroxy-2,3,4,5-tetrahydrodipicolinate + NADPH + H(+). It participates in amino-acid biosynthesis; L-lysine biosynthesis via DAP pathway; (S)-tetrahydrodipicolinate from L-aspartate: step 4/4. Catalyzes the conversion of 4-hydroxy-tetrahydrodipicolinate (HTPA) to tetrahydrodipicolinate. In Cyanothece sp. (strain PCC 7425 / ATCC 29141), this protein is 4-hydroxy-tetrahydrodipicolinate reductase.